The primary structure comprises 231 residues: NADH-quinone oxidoreductase subunit C (231 aa).

It belongs to the complex I 30 kDa subunit family. NDH-1 is composed of 14 different subunits. Subunits NuoB, C, D, E, F, and G constitute the peripheral sector of the complex.

The protein localises to the cell membrane. It catalyses the reaction a quinone + NADH + 5 H(+)(in) = a quinol + NAD(+) + 4 H(+)(out). Its function is as follows. NDH-1 shuttles electrons from NADH, via FMN and iron-sulfur (Fe-S) centers, to quinones in the respiratory chain. The immediate electron acceptor for the enzyme in this species is believed to be a menaquinone. Couples the redox reaction to proton translocation (for every two electrons transferred, four hydrogen ions are translocated across the cytoplasmic membrane), and thus conserves the redox energy in a proton gradient. The sequence is that of NADH-quinone oxidoreductase subunit C from Mycobacterium sp. (strain JLS).